The sequence spans 602 residues: MHTERQKHIRNFSIVAHIDHGKSTLADRLIEKTGTLTEREMNSQVLDNMELEKERGITIKSQAIRLIYKRKDGGEYVLNLIDTPGHVDFNYEVSRSLAACEGAILVVDATQGIQAQTLANCYLAMEHDLEILPVINKIDLPSARAEEVKEEIEDIIGIEASEAPLVSAKTGLNIEQVLEAIVDKIPSPQGDENAPLKALIFDSNYDSYKGVVCHIRVKEGNIKPGDEIKLMATGKIYEVTETGIFVPNFMPRAELRAGDVGYFTASIKNVRDARVGDTVTGAKNQAKEPLKGYRPVISMVYSGIYPVDGAKYGELKEALEKLQVNDAALNFEPETSVALGFGFRCGFLGLLHMDVIQERVEREFNLDIITTAPSVIYKIGKTDGTVVELTNPTNMPPVSEIKYMEEPIVKASIITPSEYVGAVMELAQNRRGVFRDMQYIETTRVSLNYDIPLNEIIYNFFDVLKSRTRGYASLDYELKGYKSAKLVRLDVLLNGDMVDALSMIVPEERAYDRGRGIAEKLKGIIPRQLFEIPIQAAVGGKVIARETVKAMRKDVLAKCYGGDISRKRKLLEKQKEGKKRMRQVGTVEIPQEAFMAILKTEE.

The tr-type G domain occupies 7 to 189; sequence KHIRNFSIVA…AIVDKIPSPQ (183 aa). GTP contacts are provided by residues 19–24 and 136–139; these read DHGKST and NKID.

This sequence belongs to the TRAFAC class translation factor GTPase superfamily. Classic translation factor GTPase family. LepA subfamily.

It is found in the cell membrane. The catalysed reaction is GTP + H2O = GDP + phosphate + H(+). Its function is as follows. Required for accurate and efficient protein synthesis under certain stress conditions. May act as a fidelity factor of the translation reaction, by catalyzing a one-codon backward translocation of tRNAs on improperly translocated ribosomes. Back-translocation proceeds from a post-translocation (POST) complex to a pre-translocation (PRE) complex, thus giving elongation factor G a second chance to translocate the tRNAs correctly. Binds to ribosomes in a GTP-dependent manner. This chain is Elongation factor 4, found in Clostridium kluyveri (strain ATCC 8527 / DSM 555 / NBRC 12016 / NCIMB 10680 / K1).